The following is a 72-amino-acid chain: Translation initiation factor IF-1 (72 aa).

Positions 1 to 72 constitute an S1-like domain; that stretch reads MAKEGAIEVE…TRGRIVYRYK (72 aa).

It belongs to the IF-1 family. Component of the 30S ribosomal translation pre-initiation complex which assembles on the 30S ribosome in the order IF-2 and IF-3, IF-1 and N-formylmethionyl-tRNA(fMet); mRNA recruitment can occur at any time during PIC assembly.

The protein localises to the cytoplasm. In terms of biological role, one of the essential components for the initiation of protein synthesis. Stabilizes the binding of IF-2 and IF-3 on the 30S subunit to which N-formylmethionyl-tRNA(fMet) subsequently binds. Helps modulate mRNA selection, yielding the 30S pre-initiation complex (PIC). Upon addition of the 50S ribosomal subunit IF-1, IF-2 and IF-3 are released leaving the mature 70S translation initiation complex. This chain is Translation initiation factor IF-1, found in Corynebacterium efficiens (strain DSM 44549 / YS-314 / AJ 12310 / JCM 11189 / NBRC 100395).